Here is a 61-residue protein sequence, read N- to C-terminus: Small ribosomal subunit protein uS14 (61 aa).

Positions 24, 27, 40, and 43 each coordinate Zn(2+).

The protein belongs to the universal ribosomal protein uS14 family. Zinc-binding uS14 subfamily. As to quaternary structure, part of the 30S ribosomal subunit. Contacts proteins S3 and S10. The cofactor is Zn(2+).

Its function is as follows. Binds 16S rRNA, required for the assembly of 30S particles and may also be responsible for determining the conformation of the 16S rRNA at the A site. The sequence is that of Small ribosomal subunit protein uS14 from Clostridioides difficile (strain 630) (Peptoclostridium difficile).